A 175-amino-acid polypeptide reads, in one-letter code: Anterior gradient protein 2 homolog (175 aa).

The N-terminal stretch at 1-20 (MEKIPVSAFLLLVALSYTLA) is a signal peptide. Positions 21–40 (RDTTVKPGAKKDTKDSRPKL) are required to promote cell adhesion. 2 consecutive short sequence motifs (homodimer stabilization; interchain) follow at residues 45 to 54 (SRGWGDQLIW) and 60 to 67 (EALYKSKT).

The protein belongs to the AGR family. Monomer and homodimer. Interacts with LYPD3 and DAG1 (alphaDAG1). Interacts with MUC2; disulfide-linked. In terms of tissue distribution, expressed strongly in trachea, lung, stomach, colon, prostate and small intestine. Expressed weakly in pituitary gland, salivary gland, mammary gland, bladder, appendix, ovary, fetal lung, uterus, pancreas, kidney, fetal kidney, testis, placenta, thyroid gland and in estrogen receptor (ER)-positive breast cancer cell lines.

It is found in the secreted. It localises to the endoplasmic reticulum. In terms of biological role, required for MUC2 post-transcriptional synthesis and secretion. May play a role in the production of mucus by intestinal cells. Proto-oncogene that may play a role in cell migration, cell differentiation and cell growth. Promotes cell adhesion. The sequence is that of Anterior gradient protein 2 homolog (AGR2) from Homo sapiens (Human).